The following is a 370-amino-acid chain: Histidinol-phosphate aminotransferase 1 (370 aa).

At Lys229 the chain carries N6-(pyridoxal phosphate)lysine.

Belongs to the class-II pyridoxal-phosphate-dependent aminotransferase family. Histidinol-phosphate aminotransferase subfamily. As to quaternary structure, homodimer. Pyridoxal 5'-phosphate serves as cofactor.

It carries out the reaction L-histidinol phosphate + 2-oxoglutarate = 3-(imidazol-4-yl)-2-oxopropyl phosphate + L-glutamate. Its pathway is amino-acid biosynthesis; L-histidine biosynthesis; L-histidine from 5-phospho-alpha-D-ribose 1-diphosphate: step 7/9. This is Histidinol-phosphate aminotransferase 1 from Nitrosococcus oceani (strain ATCC 19707 / BCRC 17464 / JCM 30415 / NCIMB 11848 / C-107).